The following is a 78-amino-acid chain: Defensin-like protein 171 (78 aa).

Residues 1-23 (MAKTASSLVLPIIFLVMFALVEQ) form the signal peptide. Disulfide bonds link cysteine 27-cysteine 71, cysteine 34-cysteine 56, cysteine 40-cysteine 65, and cysteine 44-cysteine 67.

Belongs to the DEFL family.

It is found in the secreted. The polypeptide is Defensin-like protein 171 (LCR61) (Arabidopsis thaliana (Mouse-ear cress)).